Reading from the N-terminus, the 281-residue chain is Pseudouridine-5'-phosphate glycosidase (281 aa).

E9 functions as the Proton donor in the catalytic mechanism. Positions 69 and 89 each coordinate substrate. D118 is a binding site for Mn(2+). 120–122 (SAD) is a binding site for substrate. The active-site Nucleophile is K139.

It belongs to the pseudouridine-5'-phosphate glycosidase family. In terms of assembly, homotrimer. The cofactor is Mn(2+).

The catalysed reaction is D-ribose 5-phosphate + uracil = psi-UMP + H2O. Catalyzes the reversible cleavage of pseudouridine 5'-phosphate (PsiMP) to ribose 5-phosphate and uracil. Functions biologically in the cleavage direction, as part of a pseudouridine degradation pathway. The chain is Pseudouridine-5'-phosphate glycosidase from Thermus thermophilus (strain ATCC BAA-163 / DSM 7039 / HB27).